A 726-amino-acid chain; its full sequence is MALSVHPSIGVARLGNANTDNFVLNPMEIGGLPYEHDVDLKPTTTVVNFKDEAGCIRRQGQVFKVFGASNEELTLDSPNVKNIEWTVHLANKKAAWYEFRELNGNLLYGRDNSYSARGVPWRNASKTASSERQSLIIDLGPRSVSGVMATVEISINNIPETYLHPSYPSGELLQGSKHFESLGTLRTDSQGRLIVLGGYGFAGGNTDLSGYGGGDDWYDDISDGSVTCVVTYSDDSSETSTAWMVVGSPDFAPEIVNISTLSDTCFDVGVRNFDLVPDMYDSATGHYKSDYVANFDRDILPIIQRISQYQWVSNVQSMSGFFSFQFDYRDGSAANKANRMKYYNYFRQLDNKVIGDYDQPQQVLMSSEVEGDILPLMPMNSGSNSVSSSNFYDLTDNVVEKFLALDATQLFLLGQWAEGEFTAGPADDYPVSDMDTASIGNCVGLPMCPGIEMTWSLQNPVIYKDAYQIKHYQDKAYFDVNGLTPERDECEEETGCEPGDLTKRMACPWQADFFNCTIQTVNFSEPSVNKASQTETVTSRTHYEWGNLPAGVSVPDQSSVSATKNVDEKVPLPPAYYSYWWPPQSPWDVLTGELDTEGQLHSHLPAGQQINYARGINSYSQMVEHWSALAFIRDRNQNNDGFPFFTETERNHELFDFKEVLVGQVTGNSEDNETSLPVFFINANKESLEGKGTKKGKLMASYFEERAFSKVRSSNIRPRSGTRMRG.

The 4'-cysteinyl-tryptophylquinone (Cys-Trp) cross-link spans 516–581; that stretch reads CTIQTVNFSE…LPPAYYSYWW (66 aa). Trp581 bears the Tryptophylquinone mark.

In terms of assembly, homotetramer. Cysteine tryptophylquinone residue is required as a cofactor. Post-translationally, the cysteine tryptophylquinone (CTQ) is generated by oxidation of the indole ring of a tryptophan residue to form tryptophylquinone, followed by covalent cross-linking with a cysteine residue.

It localises to the secreted. The catalysed reaction is L-lysine + O2 + H2O = (S)-2-amino-6-oxohexanoate + H2O2 + NH4(+). Its activity is regulated as follows. Inhibited by aminoguanidine, amiloride and beta-aminopropionitrile. Its function is as follows. Has antibacterial activity against a wide spectrum of Gram-positive and Gram-negative bacteria including nosocomial isolates of S.aureus and Pseudomonas sp. The antimicrobial activity is due to hydrogen peroxide generated by its lysine oxidase activity. Also has autotoxic activity. Involved in biofilm differentiation; responsible for cell death within microcolonies during biofilm development which is linked to the generation of a phenotypically diverse dispersal population and thus may play a role in colonization. The polypeptide is L-lysine 6-oxidase (lodA) (Marinomonas mediterranea (strain ATCC 700492 / JCM 21426 / NBRC 103028 / MMB-1)).